A 249-amino-acid chain; its full sequence is Aspartate/glutamate leucyltransferase (249 aa).

Belongs to the R-transferase family. Bpt subfamily.

The protein resides in the cytoplasm. The enzyme catalyses N-terminal L-glutamyl-[protein] + L-leucyl-tRNA(Leu) = N-terminal L-leucyl-L-glutamyl-[protein] + tRNA(Leu) + H(+). The catalysed reaction is N-terminal L-aspartyl-[protein] + L-leucyl-tRNA(Leu) = N-terminal L-leucyl-L-aspartyl-[protein] + tRNA(Leu) + H(+). Functions in the N-end rule pathway of protein degradation where it conjugates Leu from its aminoacyl-tRNA to the N-termini of proteins containing an N-terminal aspartate or glutamate. This Azorhizobium caulinodans (strain ATCC 43989 / DSM 5975 / JCM 20966 / LMG 6465 / NBRC 14845 / NCIMB 13405 / ORS 571) protein is Aspartate/glutamate leucyltransferase.